Reading from the N-terminus, the 201-residue chain is Regulator of G-protein signaling 1 (201 aa).

The RGS domain occupies 75-191 (SLEKLLVSEE…LKSEIFFRLA (117 aa)).

Its subcellular location is the cell membrane. It localises to the cytoplasm. It is found in the cytosol. In terms of biological role, regulates G protein-coupled receptor signaling cascades, including signaling downstream of the N-formylpeptide chemoattractant receptors and leukotriene receptors. Inhibits B cell chemotaxis. Inhibits signal transduction by increasing the GTPase activity of G protein alpha subunits, thereby driving them into their inactive GDP-bound form. This chain is Regulator of G-protein signaling 1 (rgs1), found in Xenopus laevis (African clawed frog).